Consider the following 245-residue polypeptide: tRNA1(Val) (adenine(37)-N6)-methyltransferase (245 aa).

It belongs to the methyltransferase superfamily. tRNA (adenine-N(6)-)-methyltransferase family.

It localises to the cytoplasm. It carries out the reaction adenosine(37) in tRNA1(Val) + S-adenosyl-L-methionine = N(6)-methyladenosine(37) in tRNA1(Val) + S-adenosyl-L-homocysteine + H(+). Specifically methylates the adenine in position 37 of tRNA(1)(Val) (anticodon cmo5UAC). This Salmonella enteritidis PT4 (strain P125109) protein is tRNA1(Val) (adenine(37)-N6)-methyltransferase.